Consider the following 244-residue polypeptide: Small ribosomal subunit protein uS3 (244 aa).

The 69-residue stretch at 39-107 (VREMLRKKLA…PAHINVTEVR (69 aa)) folds into the KH type-2 domain. The interval 213–244 (VGQEKQDDSPRNDRNDRGDRGDRPSRPAREAR) is disordered. Residues 216 to 244 (EKQDDSPRNDRNDRGDRGDRPSRPAREAR) are compositionally biased toward basic and acidic residues.

The protein belongs to the universal ribosomal protein uS3 family. In terms of assembly, part of the 30S ribosomal subunit. Forms a tight complex with proteins S10 and S14.

Its function is as follows. Binds the lower part of the 30S subunit head. Binds mRNA in the 70S ribosome, positioning it for translation. This chain is Small ribosomal subunit protein uS3, found in Xanthomonas oryzae pv. oryzae (strain MAFF 311018).